A 186-amino-acid polypeptide reads, in one-letter code: Holliday junction branch migration complex subunit RuvA (186 aa).

The segment at 1–63 (MNDYINGLLH…DNVFKYYGFK (63 aa)) is domain I. The domain II stretch occupies residues 64 to 137 (NQLIRDLFEL…QKELFNNKIS (74 aa)). Residue serine 137 is a region of interest, flexible linker. The domain III stretch occupies residues 137–186 (SDKKNKVITSLEKLGYKTKDIYKIIINIDEDMNIEDLTKYVLEQLSYLHN).

Belongs to the RuvA family. As to quaternary structure, homotetramer. Forms an RuvA(8)-RuvB(12)-Holliday junction (HJ) complex. HJ DNA is sandwiched between 2 RuvA tetramers; dsDNA enters through RuvA and exits via RuvB. An RuvB hexamer assembles on each DNA strand where it exits the tetramer. Each RuvB hexamer is contacted by two RuvA subunits (via domain III) on 2 adjacent RuvB subunits; this complex drives branch migration. In the full resolvosome a probable DNA-RuvA(4)-RuvB(12)-RuvC(2) complex forms which resolves the HJ.

It localises to the cytoplasm. In terms of biological role, the RuvA-RuvB-RuvC complex processes Holliday junction (HJ) DNA during genetic recombination and DNA repair, while the RuvA-RuvB complex plays an important role in the rescue of blocked DNA replication forks via replication fork reversal (RFR). RuvA specifically binds to HJ cruciform DNA, conferring on it an open structure. The RuvB hexamer acts as an ATP-dependent pump, pulling dsDNA into and through the RuvAB complex. HJ branch migration allows RuvC to scan DNA until it finds its consensus sequence, where it cleaves and resolves the cruciform DNA. The chain is Holliday junction branch migration complex subunit RuvA from Mycoplasma mycoides subsp. mycoides SC (strain CCUG 32753 / NCTC 10114 / PG1).